A 286-amino-acid polypeptide reads, in one-letter code: Protoheme IX farnesyltransferase (286 aa).

A run of 8 helical transmembrane segments spans residues 14–31, 38–58, 94–114, 135–155, 165–185, 207–227, 228–248, and 262–282; these read FRLTSTVAFSSGMGYILA, WLNLVLFLIGGFSITVSANII, LFLIAGTVILAVYSTLNALIL, IAVFIGAFPGAFPPMIGWIAV, VLFAIQFLWQFPHFWAIAWVL, TATIIMTYTLCLLPLGFLPYL, FGMSGITSAYIALACGILFFF, and ALLLMFGSFLYLPIVQIAFVL.

It belongs to the UbiA prenyltransferase family. Protoheme IX farnesyltransferase subfamily.

Its subcellular location is the cell inner membrane. The enzyme catalyses heme b + (2E,6E)-farnesyl diphosphate + H2O = Fe(II)-heme o + diphosphate. It functions in the pathway porphyrin-containing compound metabolism; heme O biosynthesis; heme O from protoheme: step 1/1. Its function is as follows. Converts heme B (protoheme IX) to heme O by substitution of the vinyl group on carbon 2 of heme B porphyrin ring with a hydroxyethyl farnesyl side group. This chain is Protoheme IX farnesyltransferase, found in Cytophaga hutchinsonii (strain ATCC 33406 / DSM 1761 / CIP 103989 / NBRC 15051 / NCIMB 9469 / D465).